Consider the following 895-residue polypeptide: Putative endoplasmic reticulum metallopeptidase 1-B (895 aa).

Residues 1–27 (MSTGIRRRHADEKKNILEKESLQNDET) are disordered. The Cytoplasmic segment spans residues 1–39 (MSTGIRRRHADEKKNILEKESLQNDETQREMEKDISLLR). The segment covering 9 to 27 (HADEKKNILEKESLQNDET) has biased composition (basic and acidic residues). Residues 40-60 (PAHWNFIGLFFLVLIIGTTFL) form a helical membrane-spanning segment. Over 61-374 (HKCLPEPKDP…KPAEYADRKT (314 aa)) the chain is Lumenal. N-linked (GlcNAc...) asparagine glycosylation is present at Asn-156. Positions 180 and 192 each coordinate Zn(2+). Residue Glu-226 is the Proton acceptor of the active site. Residues Glu-227, Glu-253, and His-329 each contribute to the Zn(2+) site. The chain crosses the membrane as a helical span at residues 375-395 (VFFDFLGLFVIIYPLSIAHLV). Residues 396–424 (NMLTICTVIALMSHRFYSKTFITFLALRD) lie on the Cytoplasmic side of the membrane. Residues 425–445 (YVLTILTIALVLKAMTFMSLF) form a helical membrane-spanning segment. The Lumenal segment spans residues 446-457 (TYGALRWYTRHW). Residues 458-478 (LALVAYGLPSVWAGISVQGLL) form a helical membrane-spanning segment. The Cytoplasmic portion of the chain corresponds to 479-489 (TARLAPKAREE). The helical transmembrane segment at 490–512 (YGSTLELIHLTLISGILLAFTYY) threads the bilayer. Topologically, residues 513–515 (DIA) are lumenal. Residues 516-538 (SGFLFALLLVPAIKSIITYFGAW) traverse the membrane as a helical segment. At 539–553 (PTCPTFNTILTLILS) the chain is on the cytoplasmic side. A helical membrane pass occupies residues 554–574 (FPGCAMAIYTTEMLLSIFIPI). The Lumenal portion of the chain corresponds to 575-584 (MGRSSYNPEP). Residues 585–605 (AVSFFVAFSAGCIVLSLGGLV) traverse the membrane as a helical segment. Topologically, residues 606–619 (AKSRNSRSSNEAGL) are cytoplasmic. Residues 620–640 (LELIYNILGVLLVTLTILYVF) form a helical membrane-spanning segment. Topologically, residues 641–895 (SSFWPSPYRF…WNVDQVYKYF (255 aa)) are lumenal. N-linked (GlcNAc...) asparagine glycosylation is found at Asn-679 and Asn-796.

Belongs to the peptidase M28 family. The cofactor is Zn(2+).

The protein localises to the endoplasmic reticulum membrane. The sequence is that of Putative endoplasmic reticulum metallopeptidase 1-B from Caenorhabditis elegans.